Here is a 444-residue protein sequence, read N- to C-terminus: Gentisate transporter (444 aa).

12 consecutive transmembrane segments (helical) span residues 42–64 (AAVL…YGTV), 79–101 (LGTI…GRLS), 108–127 (AAVI…CAFA), 131–153 (WVFG…SVNA), 166–188 (AWAT…LALV), 198–220 (WRFM…MKVI), 252–274 (WISI…LGTW), 289–311 (ALMF…AWAG), 318–340 (RSGV…YPPV), 344–366 (YVIL…AAVA), 378–400 (LGWA…GLLL), and 410–428 (FIMF…SVLL).

Belongs to the major facilitator superfamily. Aromatic acid:H(+) symporter (AAHS) (TC 2.A.1.15) family.

The protein localises to the cell membrane. Transport of gentisate (2,5-dihydroxybenzoate) into the cell. Does not transport 3-hydroxybenzoate or benzoate. The protein is Gentisate transporter (genK) of Corynebacterium glutamicum (strain ATCC 13032 / DSM 20300 / JCM 1318 / BCRC 11384 / CCUG 27702 / LMG 3730 / NBRC 12168 / NCIMB 10025 / NRRL B-2784 / 534).